A 302-amino-acid polypeptide reads, in one-letter code: RuBisCO operon transcriptional regulator (302 aa).

An HTH lysR-type domain is found at methionine 1–threonine 60. Positions tyrosine 20 to arginine 39 form a DNA-binding region, H-T-H motif.

Belongs to the LysR transcriptional regulatory family.

Its function is as follows. Trans-acting transcriptional regulator of RuBisCO genes (rbcAB) expression. This chain is RuBisCO operon transcriptional regulator (rbcR), found in Allochromatium vinosum (Chromatium vinosum).